The sequence spans 113 residues: Prefoldin subunit beta (113 aa).

The protein belongs to the prefoldin subunit beta family. Heterohexamer of two alpha and four beta subunits.

It localises to the cytoplasm. Its function is as follows. Molecular chaperone capable of stabilizing a range of proteins. Seems to fulfill an ATP-independent, HSP70-like function in archaeal de novo protein folding. The polypeptide is Prefoldin subunit beta (pfdB) (Methanocaldococcus jannaschii (strain ATCC 43067 / DSM 2661 / JAL-1 / JCM 10045 / NBRC 100440) (Methanococcus jannaschii)).